The primary structure comprises 232 residues: Enolase-phosphatase E1 (232 aa).

It belongs to the HAD-like hydrolase superfamily. MasA/MtnC family. Monomer. Mg(2+) is required as a cofactor.

It carries out the reaction 5-methylsulfanyl-2,3-dioxopentyl phosphate + H2O = 1,2-dihydroxy-5-(methylsulfanyl)pent-1-en-3-one + phosphate. It participates in amino-acid biosynthesis; L-methionine biosynthesis via salvage pathway; L-methionine from S-methyl-5-thio-alpha-D-ribose 1-phosphate: step 3/6. Its pathway is amino-acid biosynthesis; L-methionine biosynthesis via salvage pathway; L-methionine from S-methyl-5-thio-alpha-D-ribose 1-phosphate: step 4/6. In terms of biological role, bifunctional enzyme that catalyzes the enolization of 2,3-diketo-5-methylthiopentyl-1-phosphate (DK-MTP-1-P) into the intermediate 2-hydroxy-3-keto-5-methylthiopentenyl-1-phosphate (HK-MTPenyl-1-P), which is then dephosphorylated to form the acireductone 1,2-dihydroxy-3-keto-5-methylthiopentene (DHK-MTPene). The polypeptide is Enolase-phosphatase E1 (Xanthomonas campestris pv. campestris (strain B100)).